Here is a 324-residue protein sequence, read N- to C-terminus: CYFIP-related Rac1 interactor B (324 aa).

Gly2 is lipidated: N-myristoyl glycine. Lys74 is covalently cross-linked (Glycyl lysine isopeptide (Lys-Gly) (interchain with G-Cter in ubiquitin)).

The protein belongs to the CYRI family. Interacts with RAC1 (GTP-bound form preferentially). Post-translationally, ubiquitinated at Lys-74 upon Salmonella bacterial infection.

The protein localises to the membrane. It localises to the mitochondrion. Its function is as follows. Negatively regulates RAC1 signaling and RAC1-driven cytoskeletal remodeling. Regulates chemotaxis, cell migration and epithelial polarization by controlling the polarity, plasticity, duration and extent of protrusions. Limits Rac1 mediated activation of the Scar/WAVE complex, focuses protrusion signals and regulates pseudopod complexity by inhibiting Scar/WAVE-induced actin polymerization. Protects against Salmonella bacterial infection. Attenuates processes such as macropinocytosis, phagocytosis and cell migration and restrict sopE-mediated bacterial entry. Also restricts infection mediated by Mycobacterium tuberculosis and Listeria monocytogenes. Involved in the regulation of mitochondrial dynamics and oxidative stress. This is CYFIP-related Rac1 interactor B from Homo sapiens (Human).